A 138-amino-acid chain; its full sequence is MTKSELVEKLAARFPQLLLRDADIAVKTILDAMSDALADGHRIEIRGFGSFGLNRRPPRVGRNPKSGEKVLVPEKRVPHFKAGKELRERVDRSLERQGDSSSEGEPVSLTAVKAARQAGGHHAAGFPAEATPTLVMSR.

The span at 81–98 (KAGKELRERVDRSLERQG) shows a compositional bias: basic and acidic residues. Residues 81–138 (KAGKELRERVDRSLERQGDSSSEGEPVSLTAVKAARQAGGHHAAGFPAEATPTLVMSR) form a disordered region.

It belongs to the bacterial histone-like protein family. As to quaternary structure, heterodimer of an alpha and a beta chain.

This protein is one of the two subunits of integration host factor, a specific DNA-binding protein that functions in genetic recombination as well as in transcriptional and translational control. The protein is Integration host factor subunit beta of Ralstonia nicotianae (strain ATCC BAA-1114 / GMI1000) (Ralstonia solanacearum).